A 301-amino-acid chain; its full sequence is Dimethylsulfoniopropionate lyase (301 aa).

Residues Cys-111 and Cys-230 each act as proton donor/acceptor in the active site.

The protein belongs to the aspartate/glutamate racemases family. ALMA1 subfamily. In terms of assembly, homotetramer.

It catalyses the reaction S,S-dimethyl-beta-propiothetin = acrylate + dimethyl sulfide + H(+). In terms of biological role, mediates cleavage of dimethylsulfoniopropionate (DMSP) into dimethyl sulfide (DMS) and acrylate. DMS is the principal form by which sulfur is transported from oceans to the atmosphere and is a key component of the ocean sulfur cycle. This is Dimethylsulfoniopropionate lyase from Durusdinium sp. clade D (Symbiodinium sp. clade D).